A 766-amino-acid chain; its full sequence is Polyribonucleotide nucleotidyltransferase (766 aa).

The Mg(2+) site is built by Asp-490 and Asp-496. The 60-residue stretch at 557–616 folds into the KH domain; the sequence is PKIDTITIPVDKIKVVIGKGGEQIDKIIAETGVKIDIDDEGLCSIFSSDQSAIDRAKEII. The S1 motif domain maps to 626–694; the sequence is GEVYEAKVVR…DKGRVDASMR (69 aa). Composition is skewed to basic and acidic residues over residues 700–734 and 744–766; these read PEGY…DRNN and FELR…KKPE. Positions 700–766 are disordered; it reads PEGYVEPERK…FPELSTKKPE (67 aa).

Belongs to the polyribonucleotide nucleotidyltransferase family. Mg(2+) is required as a cofactor.

It localises to the cytoplasm. The catalysed reaction is RNA(n+1) + phosphate = RNA(n) + a ribonucleoside 5'-diphosphate. Its function is as follows. Involved in mRNA degradation. Catalyzes the phosphorolysis of single-stranded polyribonucleotides processively in the 3'- to 5'-direction. In Lactococcus lactis subsp. cremoris (strain MG1363), this protein is Polyribonucleotide nucleotidyltransferase.